A 66-amino-acid chain; its full sequence is Large ribosomal subunit protein bL35 (66 aa).

Over residues 1–26 (MPKMKTHRGSAKRFKKTASGKLKRGH) the composition is skewed to basic residues. Residues 1–29 (MPKMKTHRGSAKRFKKTASGKLKRGHAYT) are disordered.

This sequence belongs to the bacterial ribosomal protein bL35 family.

The polypeptide is Large ribosomal subunit protein bL35 (Geobacillus kaustophilus (strain HTA426)).